Reading from the N-terminus, the 608-residue chain is Phosphoenolpyruvate carboxykinase [GTP] (608 aa).

Residues arginine 82 and 222–224 (YGG) each bind substrate. Residues lysine 231 and histidine 251 each contribute to the Mn(2+) site. Serine 273 is a binding site for substrate. Position 274–279 (274–279 (ACGKTN)) interacts with GTP. Cysteine 275 is an active-site residue. A Mn(2+)-binding site is contributed by aspartate 298. Residue 389 to 391 (NSR) coordinates substrate. Residues arginine 391, arginine 422, and 517–520 (FGDN) contribute to the GTP site.

The protein belongs to the phosphoenolpyruvate carboxykinase [GTP] family. In terms of assembly, monomer. Requires Mn(2+) as cofactor.

It localises to the cytoplasm. The enzyme catalyses oxaloacetate + GTP = phosphoenolpyruvate + GDP + CO2. The protein operates within carbohydrate biosynthesis; gluconeogenesis. Catalyzes the conversion of oxaloacetate (OAA) to phosphoenolpyruvate (PEP), the rate-limiting step in the metabolic pathway that produces glucose from lactate and other precursors derived from the citric acid cycle. This Paenarthrobacter aurescens (strain TC1) protein is Phosphoenolpyruvate carboxykinase [GTP].